Here is a 259-residue protein sequence, read N- to C-terminus: Malonyl-[acyl-carrier protein] O-methyltransferase 2 (259 aa).

Belongs to the methyltransferase superfamily.

The catalysed reaction is malonyl-[ACP] + S-adenosyl-L-methionine = malonyl-[ACP] methyl ester + S-adenosyl-L-homocysteine. It functions in the pathway cofactor biosynthesis; biotin biosynthesis. Functionally, converts the free carboxyl group of a malonyl-thioester to its methyl ester by transfer of a methyl group from S-adenosyl-L-methionine (SAM). It allows to synthesize pimeloyl-ACP via the fatty acid synthetic pathway. The chain is Malonyl-[acyl-carrier protein] O-methyltransferase 2 from Ilyobacter polytropus (strain ATCC 51220 / DSM 2926 / LMG 16218 / CuHBu1).